The primary structure comprises 318 residues: Aspartate carbamoyltransferase catalytic subunit (318 aa).

Carbamoyl phosphate contacts are provided by Arg59 and Thr60. Lys87 is an L-aspartate binding site. The carbamoyl phosphate site is built by Arg109, His137, and Gln140. Residues Arg170 and Arg224 each contribute to the L-aspartate site. Residues Gly265 and Pro266 each contribute to the carbamoyl phosphate site.

It belongs to the aspartate/ornithine carbamoyltransferase superfamily. ATCase family. Heterododecamer (2C3:3R2) of six catalytic PyrB chains organized as two trimers (C3), and six regulatory PyrI chains organized as three dimers (R2).

It catalyses the reaction carbamoyl phosphate + L-aspartate = N-carbamoyl-L-aspartate + phosphate + H(+). The protein operates within pyrimidine metabolism; UMP biosynthesis via de novo pathway; (S)-dihydroorotate from bicarbonate: step 2/3. Functionally, catalyzes the condensation of carbamoyl phosphate and aspartate to form carbamoyl aspartate and inorganic phosphate, the committed step in the de novo pyrimidine nucleotide biosynthesis pathway. The polypeptide is Aspartate carbamoyltransferase catalytic subunit (Rhizobium rhizogenes (strain K84 / ATCC BAA-868) (Agrobacterium radiobacter)).